Consider the following 56-residue polypeptide: Male-specific sperm protein Mst87F (56 aa).

Belongs to the MST(3)CGP family. As to expression, testis.

This chain is Male-specific sperm protein Mst87F (Mst87F), found in Drosophila melanogaster (Fruit fly).